A 218-amino-acid chain; its full sequence is MKFFIDTANLDQIREANELGVLDGVTTNPSLMAKEGIRGVENQRKHYLEICEIVGGDVSAEVIATDLEGMIKEGEELAALHPNIVVKVPCIEAGIKAIKYFTRKGIRTNCTLVFSVGQALLAAKAGATYVSPFVGRLDDIASDGIELVRKIVEMYDYYDYDTQVLAASIRSTQHIIQCVEAGADVATCPLSAIKGLLKHPLTDSGLATFLADYKKVNG.

Lys-87 serves as the catalytic Schiff-base intermediate with substrate.

It belongs to the transaldolase family. Type 3B subfamily.

Its subcellular location is the cytoplasm. The catalysed reaction is D-sedoheptulose 7-phosphate + D-glyceraldehyde 3-phosphate = D-erythrose 4-phosphate + beta-D-fructose 6-phosphate. It participates in carbohydrate degradation; pentose phosphate pathway; D-glyceraldehyde 3-phosphate and beta-D-fructose 6-phosphate from D-ribose 5-phosphate and D-xylulose 5-phosphate (non-oxidative stage): step 2/3. Transaldolase is important for the balance of metabolites in the pentose-phosphate pathway. In Parabacteroides distasonis (strain ATCC 8503 / DSM 20701 / CIP 104284 / JCM 5825 / NCTC 11152), this protein is Probable transaldolase.